Consider the following 948-residue polypeptide: MEEKEILRRQIRLLQGLIDDYKTLHGNAPAPGTPAASGWQPPTYHSGRAFSARYPRPSRRGYSSHHGPSWRKKYSLVNRPPGPSDPPADHAVRPLHGARGGQPPVPQQHVLERQVQLSQGQNVVIKVKPPSKSGSASASGAQRGSLEEFEETPWSDQRPREGEGEPPRGQLQPSRPTRARGTCSVEDPLLVCQKEPGKPRMVKSVGSVGDSPREPRRTVSESVIAVKASFPSSALPPRTGVALGRKLGSHSVASCAPQLLGDRRVDAGHTDQPVPSGSVGGPARPASGPRQAREASLVVTCRTNKFRKNNYKWVAASSKSPRVARRALSPRVAAENVCKASAGMANKVEKPQLIADPEPKPRKPATSSKPGSAPSKYKWKASSPSASSSSSFRWQSEASSKDHASQLSPVLSRSPSGDRPAVGHSGLKPLSGETPLSAYKVKSRTKIIRRRSSTSLPGDKKSGTSPAATAKSHLSLRRRQALRGKSSPVLKKTPNKGLVQVTTHRLCRLPPSRAHLPTKEASSLHAVRTAPTSKVIKTRYRIVKKTPASPLSAPPFPLSLPSWRARRLSLSRSLVLNRLRPVASGGGKAQPGSPWWRSKGYRCIGGVLYKVSANKLSKTSGQPSDAGSRPLLRTGRLDPAGSCSRSLASRAVQRSLAIIRQARQRREKRKEYCMYYNRFGRCNRGERCPYIHDPEKVAVCTRFVRGTCKKTDGTCPFSHHVSKEKMPVCSYFLKGICSNSNCPYSHVYVSRKAEVCSDFLKGYCPLGAKCKKKHTLLCPDFARRGACPRGAQCQLLHRTQKRHSRRAATSPAPGPSDATARSRVSASHGPRKPSASQRPTRQTPSSAALTAAAVAAPPHCPGGSASPSSSKASSSSSSSSSPPASLDHEAPSLQEAALAAACSNRLCKLPSFISLQSSPSPGAQPRVRAPRAPLTKDSGKPLHIKPRL.

Disordered regions lie at residues 25 to 108, 121 to 219, 265 to 296, and 336 to 493; these read HGNA…VPQQ, QNVV…RRTV, VDAGHTDQPVPSGSVGGPARPASGPRQAREAS, and NVCK…LKKT. Residues 56 to 74 are compositionally biased toward basic residues; it reads RPSRRGYSSHHGPSWRKKY. Over residues 128–141 the composition is skewed to low complexity; the sequence is KPPSKSGSASASGA. The span at 157 to 166 shows a compositional bias: basic and acidic residues; sequence QRPREGEGEP. Residues 372 to 398 are compositionally biased toward low complexity; it reads SAPSKYKWKASSPSASSSSSFRWQSEA. The span at 405–415 shows a compositional bias: polar residues; it reads SQLSPVLSRSP. Phosphoserine is present on Ser-408. Basic residues predominate over residues 441–452; it reads VKSRTKIIRRRS. C3H1-type zinc fingers lie at residues 667-695, 699-722, 723-749, 750-777, and 778-800; these read EKRKEYCMYYNRFGRCNRGERCPYIHDPE, VCTRFVRGTCKKTDGTCPFSHHVS, KEKMPVCSYFLKGICSNSNCPYSHVYV, SRKAEVCSDFLKGYCPLGAKCKKKHTLL, and CPDFARRGACPRGAQCQLLHRTQ. Disordered regions lie at residues 798–891 and 913–948; these read RTQK…HEAP and ISLQSSPSPGAQPRVRAPRAPLTKDSGKPLHIKPRL. Over residues 834–846 the composition is skewed to polar residues; that stretch reads SASQRPTRQTPSS. 2 stretches are compositionally biased toward low complexity: residues 847 to 856 and 864 to 885; these read AALTAAAVAA and SASPSSSKASSSSSSSSSPPAS. Phosphoserine is present on residues Ser-918 and Ser-920.

In terms of assembly, interacts with SMAD1, SMAD3, SMAD4, CPSF2 and CPSF3.

Its subcellular location is the nucleus. In terms of biological role, required for the export of polyadenylated mRNAs from the nucleus. Enhances ACVR1B-induced SMAD-dependent transcription. Binds to single-stranded DNA but not to double-stranded DNA in vitro. Involved in RNA cleavage. The sequence is that of Zinc finger CCCH domain-containing protein 3 (ZC3H3) from Homo sapiens (Human).